The chain runs to 90 residues: uncharacterized protein (90 aa).

An N-terminal signal peptide occupies residues 1 to 20; that stretch reads MEKLFVLVFALALLAFSSDA.

It is found in the secreted. This is an uncharacterized protein from Mus musculus (Mouse).